An 892-amino-acid chain; its full sequence is Translation initiation factor IF-2 (892 aa).

Disordered regions lie at residues 144-176 and 189-298; these read QQRL…QKTE and SNSV…SGAH. Over residues 207–219 the composition is skewed to low complexity; that stretch reads LPRTVRPTPAARP. One can recognise a tr-type G domain in the interval 391–560; the sequence is PRPPVVTIMG…SIQAEVLELK (170 aa). Residues 400–407, 446–450, and 500–503 each bind GTP; these read GHVDHGKT, DTPGH, and SKID.

The protein belongs to the TRAFAC class translation factor GTPase superfamily. Classic translation factor GTPase family. IF-2 subfamily.

The protein resides in the cytoplasm. One of the essential components for the initiation of protein synthesis. Protects formylmethionyl-tRNA from spontaneous hydrolysis and promotes its binding to the 30S ribosomal subunits. Also involved in the hydrolysis of GTP during the formation of the 70S ribosomal complex. The protein is Translation initiation factor IF-2 of Xylella fastidiosa (strain M12).